A 2161-amino-acid polypeptide reads, in one-letter code: Voltage-dependent L-type calcium channel subunit alpha-1D (2161 aa).

Disordered regions lie at residues 1–21 (MMMMMMMKKMQHQRQQQADHA), 30–49 (TRLPLSGEGPTSQPNSSKQT), and 64–100 (KAAQTMSTSAPPPVGSLSQRKRQQYAKSKKQGNSSNS). Over 1–126 (MMMMMMMKKM…RACISIVEWK (126 aa)) the chain is Cytoplasmic. Residues 38–49 (GPTSQPNSSKQT) show a composition bias toward polar residues. The span at 82 to 93 (QRKRQQYAKSKK) shows a compositional bias: basic residues. One copy of the I repeat lies at 113–409 (NPIRRACISI…LVLGVLSGEF (297 aa)). The chain crosses the membrane as a helical span at residues 127–145 (PFDIFILLAIFANCVALAI). Residues 146–163 (YIPFPEDDSNSTNHNLEK) lie on the Extracellular side of the membrane. A glycan (N-linked (GlcNAc...) asparagine) is linked at N155. The helical transmembrane segment at 164–183 (VEYAFLIIFTVETFLKIIAY) threads the bilayer. Residues 184-195 (GLLLHPNAYVRN) are Cytoplasmic-facing. A helical transmembrane segment spans residues 196-214 (GWNLLDFVIVIVGLFSVIL). At 215–235 (EQLTKETEGGNHSSGKSGGFD) the chain is on the extracellular side. N225 carries N-linked (GlcNAc...) asparagine glycosylation. A helical membrane pass occupies residues 236 to 254 (VKALRAFRVLRPLRLVSGV). At 255–273 (PSLQVVLNSIIKAMVPLLH) the chain is on the cytoplasmic side. Residues 274–293 (IALLVLFVIIIYAIIGLELF) traverse the membrane as a helical segment. The Extracellular segment spans residues 294-381 (IGKMHKTCFF…WMNDAMGFEL (88 aa)). N-linked (GlcNAc...) asparagine glycosylation occurs at N329. Residue E364 participates in Ca(2+) binding. A helical transmembrane segment spans residues 382 to 406 (PWVYFVSLVIFGSFFVLNLVLGVLS). Residues 407 to 523 (GEFSKEREKA…RRCRAAVKSV (117 aa)) lie on the Cytoplasmic side of the membrane. The interval 429–446 (QQLEEDLKGYLDWITQAE) is binding to the beta subunit. Residues 449–482 (DPENEEEGGEEGKRNTSMPTSETESVNTENVSGE) are disordered. The span at 463–479 (NTSMPTSETESVNTENV) shows a compositional bias: polar residues. An II repeat occupies 509-755 (NRFNRRRCRA…VFLAIAVDNL (247 aa)). A helical membrane pass occupies residues 524 to 543 (TFYWLVIVLVFLNTLTISSE). Residues 544 to 558 (HYNQPDWLTQIQDIA) lie on the Extracellular side of the membrane. Residues 559–577 (NKVLLALFTCEMLVKMYSL) form a helical membrane-spanning segment. Topologically, residues 578 to 585 (GLQAYFVS) are cytoplasmic. A helical transmembrane segment spans residues 586–604 (LFNRFDCFVVCGGITETIL). Residues 605-614 (VELEIMSPLG) are Extracellular-facing. Residues 615 to 633 (ISVFRCVRLLRIFKVTRHW) form a helical membrane-spanning segment. The Cytoplasmic segment spans residues 634–652 (TSLSNLVASLLNSMKSIAS). A helical transmembrane segment spans residues 653 to 673 (LLLLLFLFIIIFSLLGMQLFG). At 674 to 727 (GKFNFDETQTKRSTFDNFPQALLTVFQILTGEDWNAVMYDGIMAYGGPSSSGMI) the chain is on the extracellular side. Residue E705 coordinates Ca(2+). Residues 728 to 752 (VCIYFIILFICGNYILLNVFLAIAV) traverse the membrane as a helical segment. The Cytoplasmic segment spans residues 753–886 (DNLADAESLN…VGCHKLINHH (134 aa)). Over residues 766-790 (KEEAEEKERKKIARKESLENKKNNK) the composition is skewed to basic and acidic residues. Residues 766–850 (KEEAEEKERK…AGPRPRRISE (85 aa)) are disordered. Residues 791–802 (PEVNQIANSDNK) are compositionally biased toward polar residues. Over residues 825–838 (VGEEEEEEEEDEPE) the composition is skewed to acidic residues. The III repeat unit spans residues 873-1155 (NPIRVGCHKL…IFVGFVIVTF (283 aa)). Residues 887–905 (IFTNLILVFIMLSSAALAA) form a helical membrane-spanning segment. Residues 906–921 (EDPIRSHSFRNTILGY) lie on the Extracellular side of the membrane. The chain crosses the membrane as a helical span at residues 922-941 (FDYAFTAIFTVEILLKMTTF). Over 942 to 953 (GAFLHKGAFCRN) the chain is Cytoplasmic. The chain crosses the membrane as a helical span at residues 954 to 972 (YFNLLDMLVVGVSLVSFGI). The Extracellular segment spans residues 973 to 978 (QSSAIS). A helical membrane pass occupies residues 979–998 (VVKILRVLRVLRPLRAINRA). Over 999-1017 (KGLKHVVQCVFVAIRTIGN) the chain is Cytoplasmic. Residues 1018–1037 (IMIVTTLLQFMFACIGVQLF) form a helical membrane-spanning segment. Residues 1038–1127 (KGKFYRCTDE…IGPIYNHRVE (90 aa)) are Extracellular-facing. Positions 1075–1165 (RIWQNSDFNF…QEQGEKEYKN (91 aa)) are dihydropyridine binding. E1101 contributes to the Ca(2+) binding site. Residues 1128 to 1148 (ISIFFIIYIIIVAFFMMNIFV) form a helical membrane-spanning segment. At 1149–1205 (GFVIVTFQEQGEKEYKNCELDKNQRQCVEYALKARPLRRYIPKNPYQYKFWYVVNSS) the chain is on the cytoplasmic side. Residues 1192 to 1467 (NPYQYKFWYV…LFVAVIMDNF (276 aa)) form an IV repeat. Residues 1206–1224 (PFEYMMFVLIMLNTLCLAM) traverse the membrane as a helical segment. The Extracellular portion of the chain corresponds to 1225–1239 (QHYEQSKMFNDAMDI). The helical transmembrane segment at 1240–1259 (LNMVFTGVFTVEMVLKVIAF) threads the bilayer. The Cytoplasmic segment spans residues 1260-1266 (KPKGYFS). A helical membrane pass occupies residues 1267-1288 (DAWNTFDSLIVIGSIIDVALSE). Residues 1289 to 1313 (ADPTESENVPVPTATPGNSEESNRI) are Extracellular-facing. Residues 1314–1333 (SITFFRLFRVMRLVKLLSRG) form a helical membrane-spanning segment. Over 1334–1352 (EGIRTLLWTFIKSFQALPY) the chain is Cytoplasmic. A helical membrane pass occupies residues 1353–1372 (VALLIAMLFFIYAVIGMQMF). Topologically, residues 1373–1439 (GKVAMRDNNQ…GEEYTCGSNF (67 aa)) are extracellular. The segment at 1420–1486 (LCDPESDYNP…LGPHHLDEFK (67 aa)) is dihydropyridine binding. Positions 1432–1475 (EYTCGSNFAIVYFISFYMLCAFLIINLFVAVIMDNFDYLTRDWS) are phenylalkylamine binding. Residues 1440 to 1464 (AIVYFISFYMLCAFLIINLFVAVIM) form a helical membrane-spanning segment. The Cytoplasmic segment spans residues 1465 to 2161 (DNFDYLTRDW…ADEMICITTL (697 aa)). Disordered regions lie at residues 1659 to 1678 (SCDLQDDEPEETKREEEDDV), 1684 to 1804 (ALLG…VKRT), 1872 to 1919 (PGRN…ASHR), and 2108 to 2152 (NGNV…EDLA). The segment covering 1745 to 1763 (SIGKQVPTSTNANLNNANM) has biased composition (polar residues). The span at 1779–1797 (HVSENGHHSSHKHDREPQR) shows a compositional bias: basic and acidic residues. Residues 2138-2152 (SDEEPDPGRDEEDLA) show a composition bias toward acidic residues.

Belongs to the calcium channel alpha-1 subunit (TC 1.A.1.11) family. CACNA1D subfamily. Voltage-dependent calcium channels are multisubunit complexes, consisting of alpha-1, alpha-2, beta and delta subunits in a 1:1:1:1 ratio. The channel activity is directed by the pore-forming and voltage-sensitive alpha-1 subunit. In many cases, this subunit is sufficient to generate voltage-sensitive calcium channel activity. The auxiliary subunits beta and alpha-2/delta linked by a disulfide bridge regulate the channel activity. Channel activity is further modulated, depending on the presence of specific delta subunit isoforms. Interacts (via IQ domain) with CABP1 and CABP4 in a calcium independent manner. Interacts with RIMBP2. Expressed in pancreatic islets and in brain, where it has been seen in cerebral cortex, hippocampus, basal ganglia, habenula and thalamus. Expressed in the small cell lung carcinoma cell line SCC-9. No expression in skeletal muscle.

The protein localises to the membrane. The catalysed reaction is Ca(2+)(in) = Ca(2+)(out). Its function is as follows. Voltage-sensitive calcium channels (VSCC) mediate the entry of calcium ions into excitable cells and are also involved in a variety of calcium-dependent processes, including muscle contraction, hormone or neurotransmitter release, gene expression, cell motility, cell division and cell death. The isoform alpha-1D gives rise to L-type calcium currents. Long-lasting (L-type) calcium channels belong to the 'high-voltage activated' (HVA) group. They are blocked by dihydropyridines (DHP), phenylalkylamines, and by benzothiazepines. Functionally, voltage-sensitive calcium channels (VSCC) mediate the entry of calcium ions into excitable cells and are also involved in a variety of calcium-dependent processes, including muscle contraction, hormone or neurotransmitter release, gene expression, cell motility, cell division and cell death. The isoform alpha-1D gives rise to L-type calcium currents. The sequence is that of Voltage-dependent L-type calcium channel subunit alpha-1D (CACNA1D) from Homo sapiens (Human).